Consider the following 108-residue polypeptide: MQITDVLIKPILTEKTYGIMMSEPRKYTFLVNAKANKNYIKQAFKAIYGVTPIAVNTKIKKPARVRTGTQNPGYSRLEKIAIITVPFGVEVAITGEKPEPKEESSSKK.

The protein belongs to the universal ribosomal protein uL23 family. Part of the 50S ribosomal subunit. Contacts protein L29, and trigger factor when it is bound to the ribosome.

Functionally, one of the early assembly proteins it binds 23S rRNA. One of the proteins that surrounds the polypeptide exit tunnel on the outside of the ribosome. Forms the main docking site for trigger factor binding to the ribosome. The sequence is that of Large ribosomal subunit protein uL23 from Mycoplasmoides gallisepticum (strain R(low / passage 15 / clone 2)) (Mycoplasma gallisepticum).